Reading from the N-terminus, the 119-residue chain is Large ribosomal subunit protein uL14m (119 aa).

Belongs to the universal ribosomal protein uL14 family.

The protein resides in the mitochondrion. This is Large ribosomal subunit protein uL14m from Tetrahymena pyriformis.